The chain runs to 243 residues: 1-(5-phosphoribosyl)-5-[(5-phosphoribosylamino)methylideneamino] imidazole-4-carboxamide isomerase (243 aa).

The active-site Proton acceptor is aspartate 10. Aspartate 129 acts as the Proton donor in catalysis.

This sequence belongs to the HisA/HisF family.

It localises to the cytoplasm. The enzyme catalyses 1-(5-phospho-beta-D-ribosyl)-5-[(5-phospho-beta-D-ribosylamino)methylideneamino]imidazole-4-carboxamide = 5-[(5-phospho-1-deoxy-D-ribulos-1-ylimino)methylamino]-1-(5-phospho-beta-D-ribosyl)imidazole-4-carboxamide. It functions in the pathway amino-acid biosynthesis; L-histidine biosynthesis; L-histidine from 5-phospho-alpha-D-ribose 1-diphosphate: step 4/9. The sequence is that of 1-(5-phosphoribosyl)-5-[(5-phosphoribosylamino)methylideneamino] imidazole-4-carboxamide isomerase from Nocardia farcinica (strain IFM 10152).